The primary structure comprises 147 residues: Ribosome-binding factor A (147 aa).

A disordered region spans residues 127 to 147 (AAEARHAGEPDPYKTDRDDAE).

The protein belongs to the RbfA family. In terms of assembly, monomer. Binds 30S ribosomal subunits, but not 50S ribosomal subunits or 70S ribosomes.

It is found in the cytoplasm. Functionally, one of several proteins that assist in the late maturation steps of the functional core of the 30S ribosomal subunit. Associates with free 30S ribosomal subunits (but not with 30S subunits that are part of 70S ribosomes or polysomes). Required for efficient processing of 16S rRNA. May interact with the 5'-terminal helix region of 16S rRNA. The polypeptide is Ribosome-binding factor A (Nocardia farcinica (strain IFM 10152)).